The chain runs to 209 residues: Large ribosomal subunit protein bL9 (209 aa).

A disordered region spans residues 181-209 (EASEEGQELAAQREATEDAGADESEETEA). Acidic residues predominate over residues 197-209 (EDAGADESEETEA).

Belongs to the bacterial ribosomal protein bL9 family.

In terms of biological role, binds to the 23S rRNA. This is Large ribosomal subunit protein bL9 from Maricaulis maris (strain MCS10) (Caulobacter maris).